We begin with the raw amino-acid sequence, 452 residues long: MQRRIMGIETEFGVTCTFHGHRRLSPDEVARYLFRRVVSWGRSSNVFLRNGARLYLDVGSHPEYATAECDNLIQLVNHDRAGERVLEELLIDAEQRLAEEGIGGDIYLFKNNTDSAGNSYGCHENFLVARAGEFSRISDVLLPFLVTRQLICGAGKVLQTPKAATFCLSQRAEHIWEGVSSATTRSRPIINTRDEPHADAEKYRRLHVIVGDSNMSESTTMLKVGTAALVLEMIEAGVSFRDFALDNPIRAIREVSHDVTGRRPVRLAGGRQASALDIQREYHARAVEHLQNRDPDPQVTQVVDLWGRMLDAVETQDFAKVDTEIDWVIKRKLFQRYQDRHGFELADPKIAQLDLAYHDIKRGRGVFDVLQRKGLVKRITEDETIEAAVDTPPQTTRAKLRGEFITAAQEAGRDFTVDWVHLKLNDQAQRTVLCKDPFRSVDERVERLIASM.

A Mg(2+)-binding site is contributed by Glu9. Position 53 (Arg53) interacts with ATP. Position 55 (Tyr55) interacts with Mg(2+). Catalysis depends on Asp57, which acts as the Proton acceptor. Glu63 is a Mg(2+) binding site. ATP is bound by residues Thr66 and Trp419.

Belongs to the Pup ligase/Pup deamidase family. Pup-conjugating enzyme subfamily.

It carries out the reaction ATP + [prokaryotic ubiquitin-like protein]-L-glutamate + [protein]-L-lysine = ADP + phosphate + N(6)-([prokaryotic ubiquitin-like protein]-gamma-L-glutamyl)-[protein]-L-lysine.. It functions in the pathway protein degradation; proteasomal Pup-dependent pathway. It participates in protein modification; protein pupylation. Its function is as follows. Catalyzes the covalent attachment of the prokaryotic ubiquitin-like protein modifier Pup to the proteasomal substrate proteins, thereby targeting them for proteasomal degradation. This tagging system is termed pupylation. The ligation reaction involves the side-chain carboxylate of the C-terminal glutamate of Pup and the side-chain amino group of a substrate lysine. This Rhodococcus jostii (strain RHA1) protein is Pup--protein ligase.